The chain runs to 659 residues: A-type ATP synthase subunit I (659 aa).

8 helical membrane passes run 376–396, 415–435, 460–480, 489–509, 513–533, 542–562, 566–586, and 590–610; these read FFFG…VISA, IMLW…SYCG, VMAL…GFIV, AAIL…LFAL, LGIP…LFVV, MAVL…LSYA, ALAL…NMVW, and IGPI…GHIF.

It belongs to the V-ATPase 116 kDa subunit family. As to quaternary structure, has multiple subunits with at least A(3), B(3), C, D, E, F, H, I and proteolipid K(x).

It localises to the cell membrane. Functionally, component of the A-type ATP synthase that produces ATP from ADP in the presence of a proton gradient across the membrane. The chain is A-type ATP synthase subunit I from Pyrococcus abyssi (strain GE5 / Orsay).